The chain runs to 249 residues: Tumor necrosis factor receptor superfamily member 13B (249 aa).

Topologically, residues 1-128 (MAMAFCPKDQ…LSSDQLTLYC (128 aa)) are extracellular. TNFR-Cys repeat units follow at residues 5 to 38 (FCPK…TDFC) and 42 to 76 (NCRK…AHFC). 6 disulfides stabilise this stretch: Cys6-Cys19, Cys22-Cys34, Cys26-Cys38, Cys43-Cys58, Cys61-Cys72, and Cys65-Cys76. The tract at residues 86 to 116 (LQPELGRPQAGEVEVRSDNSGRHQGSEHGPG) is disordered. Over residues 98-111 (VEVRSDNSGRHQGS) the composition is skewed to basic and acidic residues. Residues 129–149 (TLGVCLCAIFCCFLVALASFL) form a helical; Signal-anchor for type III membrane protein membrane-spanning segment. Residues 150 to 249 (RRRGEPLPSQ…ASTGDARPAT (100 aa)) are Cytoplasmic-facing. The disordered stretch occupies residues 156–176 (LPSQPAGPRGSQANSPHAHRP).

Binds TRAF2, TRAF5 and TRAF6. Binds the NH2-terminal domain of CAMLG with its C-terminus.

The protein resides in the membrane. Its function is as follows. Receptor for TNFSF13/APRIL and TNFSF13B/TALL1/BAFF/BLYS that binds both ligands with similar high affinity. Mediates calcineurin-dependent activation of NF-AT, as well as activation of NF-kappa-B and AP-1. Involved in the stimulation of B- and T-cell function and the regulation of humoral immunity. This is Tumor necrosis factor receptor superfamily member 13B (Tnfrsf13b) from Mus musculus (Mouse).